A 105-amino-acid polypeptide reads, in one-letter code: Small ribosomal subunit protein eS10A (105 aa).

The protein belongs to the eukaryotic ribosomal protein eS10 family. In terms of assembly, component of the small ribosomal subunit (SSU). Mature yeast ribosomes consist of a small (40S) and a large (60S) subunit. The 40S small subunit contains 1 molecule of ribosomal RNA (18S rRNA) and 33 different proteins (encoded by 57 genes). The large 60S subunit contains 3 rRNA molecules (25S, 5.8S and 5S rRNA) and 46 different proteins (encoded by 81 genes). eS10 interacts with GCN1 (via middle region); this interaction is direct and promotes GCN2 kinase activity. In terms of processing, the N-terminus is not modified.

It is found in the cytoplasm. Component of the ribosome, a large ribonucleoprotein complex responsible for the synthesis of proteins in the cell. The small ribosomal subunit (SSU) binds messenger RNAs (mRNAs) and translates the encoded message by selecting cognate aminoacyl-transfer RNA (tRNA) molecules. The large subunit (LSU) contains the ribosomal catalytic site termed the peptidyl transferase center (PTC), which catalyzes the formation of peptide bonds, thereby polymerizing the amino acids delivered by tRNAs into a polypeptide chain. The nascent polypeptides leave the ribosome through a tunnel in the LSU and interact with protein factors that function in enzymatic processing, targeting, and the membrane insertion of nascent chains at the exit of the ribosomal tunnel. eS10 plays a role as a positive regulator of the GCN2 kinase activity by stimulating GCN1-mediated GCN2 activation. The polypeptide is Small ribosomal subunit protein eS10A (Saccharomyces cerevisiae (strain ATCC 204508 / S288c) (Baker's yeast)).